The following is a 393-amino-acid chain: Serine/threonine-protein kinase US3 homolog (393 aa).

The region spanning 93–378 (FVILKTFTPG…AEVLLNHSVF (286 aa)) is the Protein kinase domain. Residues 99-107 (FTPGAEGFA) and Lys122 contribute to the ATP site. Asp206 acts as the Proton acceptor in catalysis.

The protein belongs to the protein kinase superfamily. Ser/Thr protein kinase family. Post-translationally, phosphorylated by ORF47; this phosphorylation regulates subsequent phosphorylation of proteins 24 and 27 by ORF66. Autophosphorylated.

The protein localises to the host cytoplasm. The protein resides in the host nucleus. The catalysed reaction is L-seryl-[protein] + ATP = O-phospho-L-seryl-[protein] + ADP + H(+). The enzyme catalyses L-threonyl-[protein] + ATP = O-phospho-L-threonyl-[protein] + ADP + H(+). Multifunctional serine/threonine kinase that plays a role in several processes including egress of virus particles from the nucleus, modulation of the actin cytoskeleton and inhibition of apoptosis. Phosphorylates proteins 24 and 27, two critical regulators of capsid budding from nucleus to endoplasmic reticulum, thereby facilitating virion egress. Modulates and redistributes host components of the nuclear envelope, including LMNA, emerin/EMD and the nuclear matrix protein MATR3. Phosphorylates envelope glycoprotein B (gB), probably to direct it to the cell surface. Promotes virus intracellular spread by restructuring host cell cytoskeleton. Blocks host apoptosis to extend cell survival and allow efficient viral replication. Promotes viral gene expression by phosphorylating host HDAC2 to reduce viral genome silencing. Down-regulates class I major histocompatibility complex (MHC-I) surface expression. Additionally, phosphorylates IE62 and targets it to the cytoplasm. The nuclear exclusion of IE62 enables the packaging of abundant levels of IE62 into virions. The sequence is that of Serine/threonine-protein kinase US3 homolog (66) from Varicella-zoster virus (strain Dumas) (HHV-3).